Consider the following 337-residue polypeptide: Adenylosuccinate synthetase (337 aa).

GTP is bound by residues 12–18 and 42–44; these read GDEGKGK and GHT. Asp13 acts as the Proton acceptor in catalysis. Asp13 and Gly42 together coordinate Mg(2+). Residues 13-16, 40-43, Thr127, Arg141, Gln179, Thr194, and Arg256 contribute to the IMP site; these read DEGK and NAGH. Catalysis depends on His43, which acts as the Proton donor. Residue 252–258 participates in substrate binding; sequence TVTGRRR. GTP is bound by residues Arg258, 284–286, and 324–326; these read CLD and STG.

The protein belongs to the adenylosuccinate synthetase family. As to quaternary structure, homodimer. The cofactor is Mg(2+).

The protein resides in the cytoplasm. The enzyme catalyses IMP + L-aspartate + GTP = N(6)-(1,2-dicarboxyethyl)-AMP + GDP + phosphate + 2 H(+). It participates in purine metabolism; AMP biosynthesis via de novo pathway; AMP from IMP: step 1/2. Functionally, plays an important role in the de novo pathway of purine nucleotide biosynthesis. Catalyzes the first committed step in the biosynthesis of AMP from IMP. In Methanococcus maripaludis (strain C6 / ATCC BAA-1332), this protein is Adenylosuccinate synthetase.